Here is a 30-residue protein sequence, read N- to C-terminus: Nattererin-1 (30 aa).

Expressed by the skin glands.

The protein localises to the secreted. Functionally, probably has antibacterial activity. This Physalaemus nattereri (Cuyaba dwarf frog) protein is Nattererin-1.